The following is a 333-amino-acid chain: Fructose-1,6-bisphosphatase class 1 1 (333 aa).

Mg(2+) is bound by residues glutamate 81, aspartate 100, leucine 102, and aspartate 103. Residues aspartate 103–serine 106 and asparagine 191 each bind substrate. Residue glutamate 263 coordinates Mg(2+).

The protein belongs to the FBPase class 1 family. As to quaternary structure, homotetramer. Requires Mg(2+) as cofactor.

The protein resides in the cytoplasm. The enzyme catalyses beta-D-fructose 1,6-bisphosphate + H2O = beta-D-fructose 6-phosphate + phosphate. Its pathway is carbohydrate biosynthesis; Calvin cycle. The polypeptide is Fructose-1,6-bisphosphatase class 1 1 (Cereibacter sphaeroides (strain ATCC 17025 / ATH 2.4.3) (Rhodobacter sphaeroides)).